A 281-amino-acid polypeptide reads, in one-letter code: UPF0162 protein XF_1494 (281 aa).

TPR repeat units follow at residues Val193–Gln226 and Pro227–Thr260.

It belongs to the UPF0162 family.

In Xylella fastidiosa (strain 9a5c), this protein is UPF0162 protein XF_1494.